Consider the following 413-residue polypeptide: THAP domain-containing protein 5 (413 aa).

Residues 1–85 form a THAP-type zinc finger; it reads MPRYCAASYC…LKHTAVPTIF (85 aa). A disordered region spans residues 84-118; the sequence is IFSSPDDEEKGSSQNSPQEIRREDQEETTKNVESK. A compositionally biased stretch (basic and acidic residues) spans 102-118; the sequence is EIRREDQEETTKNVESK. Positions 375–399 form a coiled coil; it reads RLRSLEALIGQLKQENLLSEEKLKI.

The protein resides in the nucleus. The protein is THAP domain-containing protein 5 (THAP5) of Gallus gallus (Chicken).